Here is a 514-residue protein sequence, read N- to C-terminus: MTDKLIIFDTTLRDGEQSPGASMTKEEKIRIAKHLERMKVDVIEAGFAASSNGDFDAIHTIAGLVKDSTICSLARANDKDIQRAADALKPANSARIHTFIATSPLHMEKKLRMTPDQVFEQARLAVRFARKFTDNVEFSPEDGSRSDLDFLCRVLEAVIAEGATTINIADTVGYGVPELYGNLVKTLRERIPNSDKAIFSVHCHNDLGMAVANSLAGVKIGGARQVECTINGLGERAGNTSLEEIVMAVKTRKDYFGLDVGLDTTQIVPTSKLVSQITGFVVQPNKAVVGANAFAHASGIHQDGVLKARDTYEIMRAEDVGWTANKIVLGKLSGRNAFKQRLQELGVSLDSETELNAAFMRFKDLADRKSEIFDEDIIAIVSEESALAQEQEHYKFVSLSQRSETGEQPQAKVVFALDGKEVTGEARGNGPVDATFNAIEGEVGSGSELLLYSVNAITTGTQAQGEVTVRLSKSGRIVNGVGTDPDIVAASAKAYIAALNKLHSKDDKLNPQRS.

One can recognise a Pyruvate carboxyltransferase domain in the interval 5-268 (LIIFDTTLRD…DVGLDTTQIV (264 aa)). Aspartate 14, histidine 202, histidine 204, and asparagine 239 together coordinate Mn(2+). Residues 395-514 (KFVSLSQRSE…KDDKLNPQRS (120 aa)) form a regulatory domain region.

This sequence belongs to the alpha-IPM synthase/homocitrate synthase family. LeuA type 1 subfamily. As to quaternary structure, homodimer. Requires Mn(2+) as cofactor.

It is found in the cytoplasm. The catalysed reaction is 3-methyl-2-oxobutanoate + acetyl-CoA + H2O = (2S)-2-isopropylmalate + CoA + H(+). Its pathway is amino-acid biosynthesis; L-leucine biosynthesis; L-leucine from 3-methyl-2-oxobutanoate: step 1/4. Functionally, catalyzes the condensation of the acetyl group of acetyl-CoA with 3-methyl-2-oxobutanoate (2-ketoisovalerate) to form 3-carboxy-3-hydroxy-4-methylpentanoate (2-isopropylmalate). This chain is 2-isopropylmalate synthase, found in Burkholderia ambifaria (strain MC40-6).